The primary structure comprises 215 residues: Large ribosomal subunit protein uL3 (215 aa).

The tract at residues 136–155 (GVSISHRSHGSTGQRQDPGK) is disordered. At glutamine 151 the chain carries N5-methylglutamine.

The protein belongs to the universal ribosomal protein uL3 family. As to quaternary structure, part of the 50S ribosomal subunit. Forms a cluster with proteins L14 and L19. In terms of processing, methylated by PrmB.

One of the primary rRNA binding proteins, it binds directly near the 3'-end of the 23S rRNA, where it nucleates assembly of the 50S subunit. This is Large ribosomal subunit protein uL3 from Rickettsia rickettsii (strain Iowa).